A 266-amino-acid polypeptide reads, in one-letter code: Putative cysteine-rich repeat secretory protein 20 (266 aa).

The signal sequence occupies residues 1–33 (MYFPPSSVPKRLVLVHISAVVAIKLLLIRSVSS). Gnk2-homologous domains lie at 40–142 (YLQH…SIRN) and 148–261 (YNNN…LYPF).

This sequence belongs to the cysteine-rich repeat secretory protein family.

The protein localises to the secreted. This Arabidopsis thaliana (Mouse-ear cress) protein is Putative cysteine-rich repeat secretory protein 20 (CRRSP20).